Consider the following 465-residue polypeptide: uncharacterized protein (465 aa).

The region spanning 6-91 (NVTLSNLIDF…LKLKREYLFR (86 aa)) is the RAMA domain. Disordered regions lie at residues 95 to 377 (TGKN…SNNQ) and 392 to 465 (YNQQ…KSKS). Over residues 117 to 137 (PQQQQQQQQQQQQQQQQQQQP) the composition is skewed to low complexity. Residues 156–169 (ETSDQDIDNDDDDA) show a composition bias toward acidic residues. A compositionally biased stretch (low complexity) spans 177-190 (TTTTTTTTTTTTTT). Residues 208-220 (PKEKKKEKKENIL) are compositionally biased toward basic and acidic residues. The stretch at 214-242 (EKKENILTKKKQQSLQYQQQLQLLQRQNS) forms a coiled coil. The span at 226 to 263 (QSLQYQQQLQLLQRQNSPPSVSPSSSTSTSSSTSSPAS) shows a compositional bias: low complexity. The segment covering 264–294 (NQIFNSFGPNSQNHNQYGINYNSQQHQPQQY) has biased composition (polar residues). Over residues 295–376 (NNNNNNNNNN…NNNINNNSNN (82 aa)) the composition is skewed to low complexity. Residues 392 to 407 (YNQQNPPKHQYPNNFL) show a composition bias toward polar residues. A compositionally biased stretch (low complexity) spans 424–442 (NQSQNQNQNQNQNQNQNQK). The span at 443–465 (SKSKSKSKSKFKSKSKSKSKSKS) shows a compositional bias: basic residues.

This is an uncharacterized protein from Dictyostelium discoideum (Social amoeba).